Here is a 220-residue protein sequence, read N- to C-terminus: Deoxyribose-phosphate aldolase 1 (220 aa).

Asp89 serves as the catalytic Proton donor/acceptor. Lys151 acts as the Schiff-base intermediate with acetaldehyde in catalysis. Lys180 functions as the Proton donor/acceptor in the catalytic mechanism.

Belongs to the DeoC/FbaB aldolase family. DeoC type 1 subfamily.

Its subcellular location is the cytoplasm. It catalyses the reaction 2-deoxy-D-ribose 5-phosphate = D-glyceraldehyde 3-phosphate + acetaldehyde. It functions in the pathway carbohydrate degradation; 2-deoxy-D-ribose 1-phosphate degradation; D-glyceraldehyde 3-phosphate and acetaldehyde from 2-deoxy-alpha-D-ribose 1-phosphate: step 2/2. Functionally, catalyzes a reversible aldol reaction between acetaldehyde and D-glyceraldehyde 3-phosphate to generate 2-deoxy-D-ribose 5-phosphate. The sequence is that of Deoxyribose-phosphate aldolase 1 from Staphylococcus aureus (strain bovine RF122 / ET3-1).